Here is a 293-residue protein sequence, read N- to C-terminus: Formamidopyrimidine-DNA glycosylase (293 aa).

The Schiff-base intermediate with DNA role is filled by proline 2. Glutamate 3 serves as the catalytic Proton donor. Lysine 58 acts as the Proton donor; for beta-elimination activity in catalysis. The DNA site is built by histidine 104, arginine 123, and lysine 166. The segment at 257–293 (AVYDRESEPCRTKGCGGVVKRFVQNGRSTFCCPKCQK) adopts an FPG-type zinc-finger fold. The active-site Proton donor; for delta-elimination activity is the arginine 283.

This sequence belongs to the FPG family. In terms of assembly, monomer. Zn(2+) serves as cofactor.

The catalysed reaction is Hydrolysis of DNA containing ring-opened 7-methylguanine residues, releasing 2,6-diamino-4-hydroxy-5-(N-methyl)formamidopyrimidine.. It carries out the reaction 2'-deoxyribonucleotide-(2'-deoxyribose 5'-phosphate)-2'-deoxyribonucleotide-DNA = a 3'-end 2'-deoxyribonucleotide-(2,3-dehydro-2,3-deoxyribose 5'-phosphate)-DNA + a 5'-end 5'-phospho-2'-deoxyribonucleoside-DNA + H(+). Involved in base excision repair of DNA damaged by oxidation or by mutagenic agents. Acts as a DNA glycosylase that recognizes and removes damaged bases. Has a preference for oxidized purines, such as 7,8-dihydro-8-oxoguanine (8-oxoG). Has AP (apurinic/apyrimidinic) lyase activity and introduces nicks in the DNA strand. Cleaves the DNA backbone by beta-delta elimination to generate a single-strand break at the site of the removed base with both 3'- and 5'-phosphates. In Rhodopseudomonas palustris (strain BisA53), this protein is Formamidopyrimidine-DNA glycosylase.